The following is a 118-amino-acid chain: Small ribosomal subunit protein uS13 (118 aa).

A disordered region spans residues 94–118 (SLPLRGQRTKTNARTRKGPRKPIKK).

This sequence belongs to the universal ribosomal protein uS13 family. Part of the 30S ribosomal subunit. Forms a loose heterodimer with protein S19. Forms two bridges to the 50S subunit in the 70S ribosome.

In terms of biological role, located at the top of the head of the 30S subunit, it contacts several helices of the 16S rRNA. In the 70S ribosome it contacts the 23S rRNA (bridge B1a) and protein L5 of the 50S subunit (bridge B1b), connecting the 2 subunits; these bridges are implicated in subunit movement. Contacts the tRNAs in the A and P-sites. This is Small ribosomal subunit protein uS13 from Shewanella oneidensis (strain ATCC 700550 / JCM 31522 / CIP 106686 / LMG 19005 / NCIMB 14063 / MR-1).